We begin with the raw amino-acid sequence, 502 residues long: Protein DETOXIFICATION 49 (502 aa).

The next 12 membrane-spanning stretches (helical) occupy residues 41 to 61 (LPLI…MLFL), 75 to 95 (LALG…SIGM), 123 to 143 (LLCS…LLFF), 153 to 173 (AEIF…LHPI), 190 to 210 (AFFA…SLGL), 216 to 236 (ALGA…YIVF), 267 to 287 (VSVC…GLLL), 293 to 313 (VASM…PSSL), 338 to 358 (RTGL…ALMV), 372 to 392 (IVKL…GNCP), 414 to 434 (LCCF…FSGF), and 439 to 459 (LWLG…VVLA).

Belongs to the multi antimicrobial extrusion (MATE) (TC 2.A.66.1) family.

It is found in the membrane. In Arabidopsis thaliana (Mouse-ear cress), this protein is Protein DETOXIFICATION 49.